The sequence spans 1469 residues: WASH complex subunit 2 (1469 aa).

Phosphoserine is present on serine 136. Disordered stretches follow at residues 178–349 and 367–546; these read YDSK…RMPV and KVQS…RVAG. The span at 197 to 206 shows a compositional bias: basic and acidic residues; the sequence is SDEKEPETKK. Serine 227 bears the Phosphoserine mark. Composition is skewed to low complexity over residues 276–293 and 306–316; these read SPPSDDPPSTSSSPTSSP and STASLSSSSSS. Positions 351 to 372 match the LFa 1 motif; that stretch reads LFNEDEFKSFMSEIVDKVQSKT. Polar residues predominate over residues 370–385; it reads SKTPSSSVSPATTIST. The segment covering 387-399 has biased composition (basic and acidic residues); the sequence is EPPKTKKPVEEYP. Phosphoserine occurs at positions 422 and 426. The span at 519–528 shows a compositional bias: acidic residues; that stretch reads FDDDDLDIDD. The LFa 5 motif lies at 550–563; sequence LFEDDDQDDVTDLF. A disordered region spans residues 571–591; sequence IPKETSSGVSPNKNVETPVAS. Over residues 574-585 the composition is skewed to polar residues; it reads ETSSGVSPNKNV. At serine 580 the chain carries Phosphoserine. Threonine 587 bears the Phosphothreonine mark. Positions 595–605 match the LFa 6 motif; the sequence is LFDDIEDEDLF. Disordered regions lie at residues 607–760, 933–1254, and 1316–1469; these read TPKA…TDLF, ALPN…KLFS, and VTTA…LDFK. 2 stretches are compositionally biased toward basic and acidic residues: residues 626–649 and 671–687; these read GEDKKQSEIAEQKSKNIETGEKQH and TEQKSDDKEWEAVKDDT. A Phosphothreonine modification is found at threonine 693. Positions 698 to 709 match the LFa 8 motif; the sequence is LFSEDLTDDELF. Composition is skewed to polar residues over residues 709–728, 735–745, and 938–956; these read FSSTSNNMAEPKSANETNEF, YTSQTEENVSP, and PSATKPSPVTPGDQPSVSS. Composition is skewed to basic and acidic residues over residues 971-990, 1031-1042, and 1077-1089; these read DNDHAGEEVQKEAEPQKDEL, ETDRSEVKETPE, and RKQESSSSERDEP. Over residues 1091 to 1109 the composition is skewed to polar residues; it reads ATVQTEAEAPSSGQNTVSS. Positions 1118 to 1136 are enriched in basic residues; it reads NKSRARGPAKRRPSTRRGR. A compositionally biased stretch (basic and acidic residues) spans 1159–1170; the sequence is DSPEVEHSERSS. Residues serine 1241, serine 1245, serine 1254, serine 1344, serine 1380, serine 1381, and serine 1408 each carry the phosphoserine modification. Low complexity-rich tracts occupy residues 1417 to 1426 and 1434 to 1452; these read FGGSSTSKAA and AARTASKPPASKTTTPTAT.

This sequence belongs to the FAM21 family. As to quaternary structure, component of the WASH complex.

Its function is as follows. Acts at least in part as component of the WASH complex which may regulate wash nucleation-promoting factor (NPF) activity and is required for its membrane targeting during endosomal sorting. This Drosophila melanogaster (Fruit fly) protein is WASH complex subunit 2.